The chain runs to 1007 residues: Beta-galactosidase A (1007 aa).

Positions 1 to 18 (MKLSSACAIALLAAQAAG) are cleaved as a signal peptide. Substrate-binding positions include Y96 and 140–142 (NAE). N-linked (GlcNAc...) asparagine glycosylation is present at N156. N199 lines the substrate pocket. E200 acts as the Proton donor in catalysis. Cystine bridges form between C205–C206 and C266–C315. Catalysis depends on E298, which acts as the Nucleophile. Y364 contacts substrate. 10 N-linked (GlcNAc...) asparagine glycosylation sites follow: N402, N422, N478, N522, N622, N739, N760, N777, N805, and N914.

This sequence belongs to the glycosyl hydrolase 35 family.

The protein resides in the secreted. It carries out the reaction Hydrolysis of terminal non-reducing beta-D-galactose residues in beta-D-galactosides.. Functionally, cleaves beta-linked terminal galactosyl residues from gangliosides, glycoproteins, and glycosaminoglycans. In Aspergillus niger (strain ATCC MYA-4892 / CBS 513.88 / FGSC A1513), this protein is Beta-galactosidase A (lacA).